Here is a 340-residue protein sequence, read N- to C-terminus: Heat-inducible transcription repressor HrcA (340 aa).

It belongs to the HrcA family.

In terms of biological role, negative regulator of class I heat shock genes (grpE-dnaK-dnaJ and groELS operons). Prevents heat-shock induction of these operons. The chain is Heat-inducible transcription repressor HrcA from Chromobacterium violaceum (strain ATCC 12472 / DSM 30191 / JCM 1249 / CCUG 213 / NBRC 12614 / NCIMB 9131 / NCTC 9757 / MK).